The primary structure comprises 517 residues: Crotonobetaine/carnitine--CoA ligase (517 aa).

Belongs to the ATP-dependent AMP-binding enzyme family.

The enzyme catalyses 4-(trimethylamino)butanoate + ATP + CoA = 4-(trimethylamino)butanoyl-CoA + AMP + diphosphate. It carries out the reaction crotonobetaine + ATP + CoA = crotonobetainyl-CoA + AMP + diphosphate. It catalyses the reaction (R)-carnitine + ATP + CoA = (R)-carnitinyl-CoA + AMP + diphosphate. It participates in amine and polyamine metabolism; carnitine metabolism. Catalyzes the transfer of CoA to carnitine, generating the initial carnitinyl-CoA needed for the CaiB reaction cycle. Also has activity toward crotonobetaine and gamma-butyrobetaine. This is Crotonobetaine/carnitine--CoA ligase from Salmonella paratyphi A (strain ATCC 9150 / SARB42).